A 179-amino-acid polypeptide reads, in one-letter code: Natural killer cells antigen CD94 (179 aa).

Residues 1-10 lie on the Cytoplasmic side of the membrane; that stretch reads MAVSQTTLWN. The chain crosses the membrane as a helical; Signal-anchor for type II membrane protein span at residues 11-31; it reads LISGILGVICLLLMTTMGILL. Over 32-179 the chain is Extracellular; that stretch reads KNLLLTESIQ…SRFICKQELM (148 aa). Intrachain disulfides connect Cys-58–Cys-70, Cys-61–Cys-72, Cys-89–Cys-174, and Cys-152–Cys-166. The 108-residue stretch at 68–175 folds into the C-type lectin domain; it reads HQCNCYLFFD…CEDKSRFICK (108 aa). 2 N-linked (GlcNAc...) asparagine glycosylation sites follow: Asn-93 and Asn-125.

Can form disulfide-bonded heterodimer with NKG2 family members KLRC1 and KLRC2. KLRD1-KLRC1 heterodimer interacts with peptide-bound MHC-E-B2M heterotrimeric complex. KLRD1 plays a prominent role in directly interacting with MHC-E. KLRD1-KLRC1 interacts with much higher affinity with peptide-bound MHC-E-B2M than KLRD1-KLRC2. Interacts with the adapter protein TYROBP/DAP12; this interaction is required for cell surface expression and cell activation.

It localises to the cell membrane. Functionally, immune receptor involved in self-nonself discrimination. In complex with KLRC1 or KLRC2 on cytotoxic and regulatory lymphocyte subsets, recognizes non-classical major histocompatibility (MHC) class Ib molecule MHC-E loaded with self-peptides derived from the signal sequence of classical MHC class Ia and non-classical MHC class Ib molecules. Enables cytotoxic cells to monitor the expression of MHC class I molecules in healthy cells and to tolerate self. Primarily functions as a ligand binding subunit as it lacks the capacity to signal. KLRD1-KLRC1 acts as an immune inhibitory receptor. Key inhibitory receptor on natural killer (NK) cells that regulates their activation and effector functions. Dominantly counteracts T cell receptor signaling on a subset of memory/effector CD8-positive T cells as part of an antigen-driven response to avoid autoimmunity. On intraepithelial CD8-positive gamma-delta regulatory T cells triggers TGFB1 secretion, which in turn limits the cytotoxic programming of intraepithelial CD8-positive alpha-beta T cells, distinguishing harmless from pathogenic antigens. In MHC-E-rich tumor microenvironment, acts as an immune inhibitory checkpoint and may contribute to progressive loss of effector functions of NK cells and tumor-specific T cells, a state known as cell exhaustion. Upon MHC-E-peptide binding, transmits intracellular signals through KLRC1 immunoreceptor tyrosine-based inhibition motifs (ITIMs) by recruiting INPP5D/SHIP-1 and INPPL1/SHIP-2 tyrosine phosphatases to ITIMs, and ultimately opposing signals transmitted by activating receptors through dephosphorylation of proximal signaling molecules. Its function is as follows. KLRD1-KLRC2 acts as an immune activating receptor. On cytotoxic lymphocyte subsets recognizes MHC-E loaded with signal sequence-derived peptides from non-classical MHC class Ib MHC-G molecules, likely playing a role in the generation and effector functions of adaptive NK cells and in maternal-fetal tolerance during pregnancy. Regulates the effector functions of terminally differentiated cytotoxic lymphocyte subsets, and in particular may play a role in adaptive NK cell response to viral infection. Upon MHC-E-peptide binding, transmits intracellular signals via the adapter protein TYROBP/DAP12, triggering the phosphorylation of proximal signaling molecules and cell activation. The chain is Natural killer cells antigen CD94 (KLRD1) from Canis lupus familiaris (Dog).